The following is a 204-amino-acid chain: UPF0637 protein USA300HOU_1046.1 (204 aa).

The protein belongs to the UPF0637 family.

The chain is UPF0637 protein USA300HOU_1046.1 from Staphylococcus aureus (strain USA300 / TCH1516).